The primary structure comprises 69 residues: Omega-oxotoxin-Ol1a (69 aa).

Positions 1-68 (DWECLPLHSS…GKINTCDKYK (68 aa)) constitute an Oxytoxin-type inhibitor cystine knot (ICK) domain. 5 cysteine pairs are disulfide-bonded: C4–C18, C11–C23, C15–C64, C17–C52, and C25–C50. The residue at position 69 (N69) is an Asparagine amide.

It belongs to the spiderine family. Spiderine subfamily. Expressed by the venom gland.

The protein localises to the secreted. Weak blocker of vertebrate P/Q-, N- and L-type voltage-gated calcium channels (Cav1 and Cav2). Is both paralytic and lethal when injected into lepidopteran larvae. Is not toxic to mice. The sequence is that of Omega-oxotoxin-Ol1a from Oxyopes lineatus (Lynx spider).